The chain runs to 482 residues: Hydrogenase transcriptional regulatory protein HoxA (482 aa).

The region spanning 7 to 121 (TVLVVDDETR…HLIDTVRQAV (115 aa)) is the Response regulatory domain. At aspartate 55 the chain carries 4-aspartylphosphate. Residues 167–394 (APGSPLDAVC…LRNEIYRAVA (228 aa)) enclose the Sigma-54 factor interaction domain. ATP is bound by residues 193–200 (GESGTGKE) and 265–274 (EIGDTSPAFQ). The segment at residues 456 to 475 (KTHAAKELGLSRVGLRQKLL) is a DNA-binding region (H-T-H motif).

The protein localises to the cytoplasm. Its function is as follows. Probable member of the two-component regulatory system involved in the regulation of the hydrogenase activity. HoxA is probably phosphorylated by a sensory component (which could be HoxX) and then acts in conjunction with sigma-54 as a transcriptional activator. The sequence is that of Hydrogenase transcriptional regulatory protein HoxA (hoxA) from Cupriavidus necator (strain ATCC 17699 / DSM 428 / KCTC 22496 / NCIMB 10442 / H16 / Stanier 337) (Ralstonia eutropha).